Here is a 585-residue protein sequence, read N- to C-terminus: Organic cation transporter 1 (585 aa).

The Cytoplasmic portion of the chain corresponds to 1–40; it reads MSFQAMETFAEISQEILMSATKPPDFDFVLEQVGNYGTYQ. A helical membrane pass occupies residues 41–61; the sequence is IVFFFIICLPTSLPSAFSAFN. Topologically, residues 62–155 are extracellular; sequence IPFVVGNPPH…LVCDQQAWIE (94 aa). Residues Asn87, Asn98, and Asn133 are each glycosylated (N-linked (GlcNAc...) asparagine). Residues 156-176 traverse the membrane as a helical segment; the sequence is ISTTSFYVGSFIGNCLFGYVA. Residues 177–184 lie on the Cytoplasmic side of the membrane; the sequence is DKFGRRRS. The helical transmembrane segment at 185–205 threads the bilayer; that stretch reads FFVILTVLIVCGTASSFAKDI. Topologically, residues 206-212 are extracellular; that stretch reads ESFIILR. The chain crosses the membrane as a helical span at residues 213 to 233; it reads FFTGLAFPALFQIPFIICMEF. Residues 234 to 243 are Cytoplasmic-facing; it reads MGNSGRIFSG. Residues 244 to 264 form a helical membrane-spanning segment; that stretch reads LMTSLFFGAAMALLGVVAMFI. The Extracellular segment spans residues 265–269; that stretch reads RRWRQ. Residues 270–290 traverse the membrane as a helical segment; the sequence is LTFFCNAPFAFYIIYYFFLPE. Over 291-360 the chain is Cytoplasmic; it reads SPRWSVSVGK…FKTPNLRRKT (70 aa). The chain crosses the membrane as a helical span at residues 361–381; the sequence is LIVTYIWVMNAIIYNGLTLNV. The Extracellular portion of the chain corresponds to 382–389; it reads SNLPVDDY. A helical transmembrane segment spans residues 390–410; sequence WSFIINGAVELPGYFVVWPLL. Over 411–416 the chain is Cytoplasmic; the sequence is QCAGRR. Residues 417–437 form a helical membrane-spanning segment; sequence WTLAATMIVCGIGCVSAMFMP. Residues 438 to 446 are Extracellular-facing; that stretch reads DGYPWLVAS. A helical transmembrane segment spans residues 447-467; sequence ASFIGKFGVGSGFAVIYIFAG. Residues 468–476 lie on the Cytoplasmic side of the membrane; that stretch reads ELYPTVVRA. A helical membrane pass occupies residues 477–497; that stretch reads IGMGMSSMVAGSGLLLAPHIV. Topologically, residues 498 to 504 are extracellular; the sequence is NLGKIVK. A helical membrane pass occupies residues 505–525; that stretch reads ILPLLIMGLMALSAGILTFFL. Over 526 to 585 the chain is Cytoplasmic; sequence PETLGAPLPMTIEDAENFGKKPEPDSGMFTQAAKKRESQPLLEPHTPMDRRRRSSRLMNI. The tract at residues 544–585 is disordered; that stretch reads GKKPEPDSGMFTQAAKKRESQPLLEPHTPMDRRRRSSRLMNI. Residues 575-585 show a composition bias toward basic residues; it reads RRRRSSRLMNI.

It belongs to the major facilitator (TC 2.A.1) superfamily. Organic cation transporter (TC 2.A.1.19) family.

The protein localises to the membrane. Functionally, transports organic cations such as tetraethylammonium (TEA). Displays a broad substrate specificity. The sequence is that of Organic cation transporter 1 (oct-1) from Caenorhabditis elegans.